Consider the following 604-residue polypeptide: Putative ankyrin repeat protein L56 (604 aa).

13 ANK repeats span residues 77-106 (IDRY…DILV), 135-164 (FFKS…NADG), 166-189 (LSAC…YDDN), 190-219 (TIYH…EDKR), 221-247 (NVFI…KWKI), 248-277 (DVEF…DSKY), 314-341 (KFSK…NENV), 342-371 (DLRE…EFTD), 380-410 (EHIT…SRSY), 445-474 (YSQA…DIKP), 475-504 (ITNI…DITI), 505-534 (NDNR…DIRT), and 535-565 (DDDY…EPSN).

This Acanthamoeba polyphaga (Amoeba) protein is Putative ankyrin repeat protein L56.